Consider the following 309-residue polypeptide: Malate dehydrogenase (309 aa).

NAD(+)-binding positions include 9–14 (GAGFVG) and D33. Substrate is bound by residues R82 and R88. NAD(+) contacts are provided by residues N95 and 118 to 120 (VNN). Substrate-binding residues include N120 and R151. H175 (proton acceptor) is an active-site residue.

It belongs to the LDH/MDH superfamily. MDH type 3 family.

The catalysed reaction is (S)-malate + NAD(+) = oxaloacetate + NADH + H(+). In terms of biological role, catalyzes the reversible oxidation of malate to oxaloacetate. The chain is Malate dehydrogenase from Chloroflexus aggregans (strain MD-66 / DSM 9485).